A 324-amino-acid polypeptide reads, in one-letter code: Beta-ketoacyl-[acyl-carrier-protein] synthase III (324 aa).

Catalysis depends on residues Cys-114 and His-246. Positions 247 to 251 are ACP-binding; it reads QANLR. Asn-276 is an active-site residue.

It belongs to the thiolase-like superfamily. FabH family. As to quaternary structure, homodimer.

The protein localises to the cytoplasm. It catalyses the reaction malonyl-[ACP] + acetyl-CoA + H(+) = 3-oxobutanoyl-[ACP] + CO2 + CoA. Its pathway is lipid metabolism; fatty acid biosynthesis. Catalyzes the condensation reaction of fatty acid synthesis by the addition to an acyl acceptor of two carbons from malonyl-ACP. Catalyzes the first condensation reaction which initiates fatty acid synthesis and may therefore play a role in governing the total rate of fatty acid production. Possesses both acetoacetyl-ACP synthase and acetyl transacylase activities. Its substrate specificity determines the biosynthesis of branched-chain and/or straight-chain of fatty acids. This chain is Beta-ketoacyl-[acyl-carrier-protein] synthase III, found in Campylobacter jejuni subsp. jejuni serotype O:6 (strain 81116 / NCTC 11828).